Reading from the N-terminus, the 231-residue chain is 6-phosphogluconolactonase (231 aa).

This sequence belongs to the glucosamine/galactosamine-6-phosphate isomerase family. 6-phosphogluconolactonase subfamily.

It carries out the reaction 6-phospho-D-glucono-1,5-lactone + H2O = 6-phospho-D-gluconate + H(+). Its pathway is carbohydrate degradation; pentose phosphate pathway; D-ribulose 5-phosphate from D-glucose 6-phosphate (oxidative stage): step 2/3. In terms of biological role, hydrolysis of 6-phosphogluconolactone to 6-phosphogluconate. The polypeptide is 6-phosphogluconolactonase (pgl) (Neisseria meningitidis serogroup A / serotype 4A (strain DSM 15465 / Z2491)).